The sequence spans 49 residues: Putative DNA-directed RNA polymerase subunit omega (49 aa).

This sequence belongs to the RNA polymerase subunit omega family.

The protein resides in the plastid. The protein localises to the chloroplast. The enzyme catalyses RNA(n) + a ribonucleoside 5'-triphosphate = RNA(n+1) + diphosphate. Functionally, may be involved in RNA polymerase activity. This chain is Putative DNA-directed RNA polymerase subunit omega (rpoZ), found in Cyanidioschyzon merolae (strain NIES-3377 / 10D) (Unicellular red alga).